Reading from the N-terminus, the 297-residue chain is HTH-type transcriptional regulator ArgP (297 aa).

In terms of domain architecture, HTH lysR-type spans 4–60 (PDYRTLQALDAVIRERGFERAAQKLCITQSAVSQRIKQLENMFGQPLLVRTVPPRPT). The segment at residues 21–40 (FERAAQKLCITQSAVSQRIK) is a DNA-binding region (H-T-H motif).

The protein belongs to the LysR transcriptional regulatory family. In terms of assembly, homodimer.

In terms of biological role, controls the transcription of genes involved in arginine and lysine metabolism. This is HTH-type transcriptional regulator ArgP from Escherichia coli O7:K1 (strain IAI39 / ExPEC).